Here is a 289-residue protein sequence, read N- to C-terminus: Acetyl-coenzyme A carboxylase carboxyl transferase subunit beta (289 aa).

The CoA carboxyltransferase N-terminal domain occupies 36–289 (MWLRCPHCHQ…LLKTGSVANE (254 aa)). 4 residues coordinate Zn(2+): Cys-40, Cys-43, Cys-58, and Cys-61. A C4-type zinc finger spans residues 40–61 (CPHCHQLLFAKQLTQYAVCPNC).

Belongs to the AccD/PCCB family. Acetyl-CoA carboxylase is a heterohexamer composed of biotin carboxyl carrier protein (AccB), biotin carboxylase (AccC) and two subunits each of ACCase subunit alpha (AccA) and ACCase subunit beta (AccD). The cofactor is Zn(2+).

Its subcellular location is the cytoplasm. The enzyme catalyses N(6)-carboxybiotinyl-L-lysyl-[protein] + acetyl-CoA = N(6)-biotinyl-L-lysyl-[protein] + malonyl-CoA. It functions in the pathway lipid metabolism; malonyl-CoA biosynthesis; malonyl-CoA from acetyl-CoA: step 1/1. Component of the acetyl coenzyme A carboxylase (ACC) complex. Biotin carboxylase (BC) catalyzes the carboxylation of biotin on its carrier protein (BCCP) and then the CO(2) group is transferred by the transcarboxylase to acetyl-CoA to form malonyl-CoA. In Limosilactobacillus reuteri subsp. reuteri (strain JCM 1112) (Lactobacillus reuteri), this protein is Acetyl-coenzyme A carboxylase carboxyl transferase subunit beta.